Here is a 339-residue protein sequence, read N- to C-terminus: GTPase Obg (339 aa).

Positions 1-159 (MKFLDQAKVY…RALWLRLKLI (159 aa)) constitute an Obg domain. An OBG-type G domain is found at 160 to 327 (ADGGIIGLPN…VLRSVAHVIE (168 aa)). Residues 166–173 (GLPNAGKS), 191–195 (FTTLY), 212–215 (DIPG), 279–282 (SQVD), and 308–310 (SAV) contribute to the GTP site. 2 residues coordinate Mg(2+): serine 173 and threonine 193.

The protein belongs to the TRAFAC class OBG-HflX-like GTPase superfamily. OBG GTPase family. As to quaternary structure, monomer. Mg(2+) serves as cofactor.

The protein resides in the cytoplasm. Functionally, an essential GTPase which binds GTP, GDP and possibly (p)ppGpp with moderate affinity, with high nucleotide exchange rates and a fairly low GTP hydrolysis rate. Plays a role in control of the cell cycle, stress response, ribosome biogenesis and in those bacteria that undergo differentiation, in morphogenesis control. In Bartonella bacilliformis (strain ATCC 35685 / KC583 / Herrer 020/F12,63), this protein is GTPase Obg.